Here is a 248-residue protein sequence, read N- to C-terminus: Small ribosomal subunit protein uS3 (248 aa).

The 75-residue stretch at 39–113 (IRAYLTKQLS…TIRINVVEVT (75 aa)) folds into the KH type-2 domain. The interval 218–248 (ERPEQKVPLQQPKRRQQRRRPTFEDRSAVEA) is disordered. The segment covering 238-248 (PTFEDRSAVEA) has biased composition (basic and acidic residues).

This sequence belongs to the universal ribosomal protein uS3 family. In terms of assembly, part of the 30S ribosomal subunit. Forms a tight complex with proteins S10 and S14.

Binds the lower part of the 30S subunit head. Binds mRNA in the 70S ribosome, positioning it for translation. The protein is Small ribosomal subunit protein uS3 of Synechococcus sp. (strain JA-3-3Ab) (Cyanobacteria bacterium Yellowstone A-Prime).